The primary structure comprises 710 residues: Polyribonucleotide nucleotidyltransferase (710 aa).

Residues Asp-489 and Asp-495 each coordinate Mg(2+). The KH domain maps to 556-615 (PKIDTIKIDVDKIKVVIGKGGETIDKIIAETGVKIDIDDEGNVSIYSSDQAAIDRTKEII). Positions 625–693 (GEVYHAKVIR…EKGRVDASMK (69 aa)) constitute an S1 motif domain. Residues 691–710 (SMKALIPRPPKPEKKEEKHD) form a disordered region. A compositionally biased stretch (basic and acidic residues) spans 700–710 (PKPEKKEEKHD).

Belongs to the polyribonucleotide nucleotidyltransferase family. Requires Mg(2+) as cofactor.

It localises to the cytoplasm. It carries out the reaction RNA(n+1) + phosphate = RNA(n) + a ribonucleoside 5'-diphosphate. Its function is as follows. Involved in mRNA degradation. Catalyzes the phosphorolysis of single-stranded polyribonucleotides processively in the 3'- to 5'-direction. This Streptococcus pyogenes serotype M18 (strain MGAS8232) protein is Polyribonucleotide nucleotidyltransferase.